Consider the following 206-residue polypeptide: FMN-dependent NADH:quinone oxidoreductase 1 (206 aa).

FMN is bound by residues Ser10 and 16–18 (SLS).

This sequence belongs to the azoreductase type 1 family. Homodimer. FMN is required as a cofactor.

It catalyses the reaction 2 a quinone + NADH + H(+) = 2 a 1,4-benzosemiquinone + NAD(+). The enzyme catalyses N,N-dimethyl-1,4-phenylenediamine + anthranilate + 2 NAD(+) = 2-(4-dimethylaminophenyl)diazenylbenzoate + 2 NADH + 2 H(+). Functionally, quinone reductase that provides resistance to thiol-specific stress caused by electrophilic quinones. Also exhibits azoreductase activity. Catalyzes the reductive cleavage of the azo bond in aromatic azo compounds to the corresponding amines. This is FMN-dependent NADH:quinone oxidoreductase 1 from Burkholderia lata (strain ATCC 17760 / DSM 23089 / LMG 22485 / NCIMB 9086 / R18194 / 383).